Consider the following 414-residue polypeptide: Patatin-like protein 1 (414 aa).

The PNPLA domain occupies 20–224 (LAIDGGGIRG…AANNPTMVAM (205 aa)). The short motif at 24–29 (GGGIRG) is the GXGXXG element. A GXSXG motif is present at residues 62-66 (GTSTG). The Nucleophile role is filled by Ser-64. The active-site Proton acceptor is the Asp-211. The short motif at 211–213 (DGG) is the DGA/G element.

This sequence belongs to the patatin family.

Possesses non-specific lipolytic acyl hydrolase (LAH) activity. Hydrolyzes phospholipids as well as galactolipids. May play a role in disease resistance. The polypeptide is Patatin-like protein 1 (PLP1) (Oryza sativa subsp. indica (Rice)).